Consider the following 188-residue polypeptide: CMT1A duplicated region transcript 15 protein (188 aa).

In terms of tissue distribution, expressed in fetal heart, kidney, liver, lung and spleen.

This chain is CMT1A duplicated region transcript 15 protein (CDRT15), found in Homo sapiens (Human).